The sequence spans 57 residues: Large ribosomal subunit protein bL32 (57 aa).

Over residues 1–20 (MAVPKKKTSKTKRDQRKANW) the composition is skewed to basic residues. Residues 1–21 (MAVPKKKTSKTKRDQRKANWK) form a disordered region.

This sequence belongs to the bacterial ribosomal protein bL32 family.

The sequence is that of Large ribosomal subunit protein bL32 from Rippkaea orientalis (strain PCC 8801 / RF-1) (Cyanothece sp. (strain PCC 8801)).